We begin with the raw amino-acid sequence, 304 residues long: Bacteriochlorophyll synthase 33 kDa chain (304 aa).

9 consecutive transmembrane segments (helical) span residues 26 to 46 (VTWF…NVPI), 51 to 71 (GVVV…SQAA), 94 to 114 (IPGL…LVVG), 117 to 137 (LGSW…AYSV), 151 to 171 (GLVG…VLLA), 178 to 198 (GFPI…IMTI), 227 to 247 (IACT…YLFS), 250 to 270 (YHAT…SVWM), and 279 to 299 (WYNG…AFAI).

It is found in the cell membrane. Its pathway is porphyrin-containing compound metabolism; bacteriochlorophyll biosynthesis (light-independent). Functionally, catalyzes the esterification of bacteriochlorophyllide a by geranylgeraniol-PPi. In Rhodobacter capsulatus (strain ATCC BAA-309 / NBRC 16581 / SB1003), this protein is Bacteriochlorophyll synthase 33 kDa chain (bchG).